The following is a 201-amino-acid chain: Glycerol-3-phosphate acyltransferase (201 aa).

A run of 5 helical transmembrane segments spans residues 5–25 (LLGA…FGVV), 55–75 (KMGV…ILLA), 88–108 (WSTA…WLGF), 118–138 (LGIF…GYAV), and 164–184 (TYGV…LIFL).

The protein belongs to the PlsY family. In terms of assembly, probably interacts with PlsX.

The protein resides in the cell inner membrane. It catalyses the reaction an acyl phosphate + sn-glycerol 3-phosphate = a 1-acyl-sn-glycero-3-phosphate + phosphate. It functions in the pathway lipid metabolism; phospholipid metabolism. Its function is as follows. Catalyzes the transfer of an acyl group from acyl-phosphate (acyl-PO(4)) to glycerol-3-phosphate (G3P) to form lysophosphatidic acid (LPA). This enzyme utilizes acyl-phosphate as fatty acyl donor, but not acyl-CoA or acyl-ACP. This is Glycerol-3-phosphate acyltransferase from Anaeromyxobacter dehalogenans (strain 2CP-C).